The primary structure comprises 205 residues: Guanylate kinase (205 aa).

In terms of domain architecture, Guanylate kinase-like spans 5-183; the sequence is GTLYTVSAPS…ALTEFRSIVV (179 aa). 12 to 19 provides a ligand contact to ATP; the sequence is APSGAGKT.

It belongs to the guanylate kinase family.

The protein resides in the cytoplasm. It catalyses the reaction GMP + ATP = GDP + ADP. Essential for recycling GMP and indirectly, cGMP. The protein is Guanylate kinase of Saccharophagus degradans (strain 2-40 / ATCC 43961 / DSM 17024).